Here is a 389-residue protein sequence, read N- to C-terminus: Dihydroorotase (389 aa).

Positions 51 and 53 each coordinate Zn(2+). Substrate is bound by residues 53 to 55 (HVR) and N85. Residues K133, H158, H192, and D254 each coordinate Zn(2+). Position 133 is an N6-carboxylysine (K133). D254 is an active-site residue. Residues H258 and 272–273 (PG) each bind substrate.

It belongs to the metallo-dependent hydrolases superfamily. DHOase family. Class I DHOase subfamily. Zn(2+) is required as a cofactor.

It catalyses the reaction (S)-dihydroorotate + H2O = N-carbamoyl-L-aspartate + H(+). It functions in the pathway pyrimidine metabolism; UMP biosynthesis via de novo pathway; (S)-dihydroorotate from bicarbonate: step 3/3. In terms of biological role, catalyzes the reversible cyclization of carbamoyl aspartate to dihydroorotate. This Sulfurisphaera tokodaii (strain DSM 16993 / JCM 10545 / NBRC 100140 / 7) (Sulfolobus tokodaii) protein is Dihydroorotase.